Here is a 129-residue protein sequence, read N- to C-terminus: Small ribosomal subunit protein uS11 (129 aa).

The protein belongs to the universal ribosomal protein uS11 family. In terms of assembly, part of the 30S ribosomal subunit. Interacts with proteins S7 and S18. Binds to IF-3.

Its function is as follows. Located on the platform of the 30S subunit, it bridges several disparate RNA helices of the 16S rRNA. Forms part of the Shine-Dalgarno cleft in the 70S ribosome. This chain is Small ribosomal subunit protein uS11, found in Rhodopseudomonas palustris (strain HaA2).